The primary structure comprises 635 residues: MSVETQKETLGFQTEVKQLLHLMIHSLYSNKEIFLRELISNASDAVDKLRFEALSRPELLEGGAELKIRVSFDKDAKTVTLEDNGIGMSREDVITHLGTIAKSGTADFMKNLSGDQKKDSHLIGQFGVGFYSAFIVADQVEVFSRRAGSPSSEGVHWSSKGEGEFEVANVDKAERGTRIVLHLKNGEEEFADGYRLRNIIKKYSDHIALPIELPKEQAPAAEGEEAPAQEWETVNRASALWTRPRTEVKDEEYQEFYKHVAHDYENPLSWSHNKVEGKLEYTSLLYVPARAPFDLYQREAPRGLKLYVQRVFVMDQAESFLPLYMRFVKGVVDSNDLSLNVSREILQKDPIIDSMKSALTKRVLDMLEKLAKNEPEQYKGFWKNFGQVLKEGPAEDFANKEKIAGLLRFASTSDDSGEQSVSLADYLARGKEGQDKIYYLTGESYAQVRNSPHLEVFRKKGIEVLLLTDRIDEWLMSYLSDFDGKNFVDVARGDLDLGNLDSEEDKKAQEEIAKDKEGLIERLKAALGESVSEVRVSHRLTDSPAILAIGEQDMGLQMRQILEASGQKVPDSKPIFEFNPAHPLIGKLDAEQSEERFGDLSHILFDQAALAAGDSLKDPAAYVRRLNKLLVELSV.

An a; substrate-binding region spans residues 1–343 (MSVETQKETL…SNDLSLNVSR (343 aa)). The interval 344-560 (EILQKDPIID…EQDMGLQMRQ (217 aa)) is b. Residues 561–635 (ILEASGQKVP…LNKLLVELSV (75 aa)) form a c region.

It belongs to the heat shock protein 90 family. As to quaternary structure, homodimer.

The protein resides in the cytoplasm. Functionally, molecular chaperone. Has ATPase activity. This chain is Chaperone protein HtpG, found in Pseudomonas syringae pv. tomato (strain ATCC BAA-871 / DC3000).